A 213-amino-acid polypeptide reads, in one-letter code: Major fimbrial subunit (213 aa).

The signal sequence occupies residues 1–20; sequence MKKTLLGSLILLAFAGNVQA. Cysteines 41 and 81 form a disulfide.

The protein belongs to the fimbrial protein family.

It is found in the fimbrium. In terms of biological role, mediates adherence to oropharyngeal epithelial cells. Helps the airway colonization process. This Haemophilus influenzae protein is Major fimbrial subunit (hifA).